The following is a 443-amino-acid chain: FAD-dependent monooxygenase orf3 (443 aa).

A helical transmembrane segment spans residues 5-25 (SIEVAIIGAGITGITLALGLL). FAD-binding residues include Glu35 and Gly48. Asn75 and Asn87 each carry an N-linked (GlcNAc...) asparagine glycan. Arg116 is a binding site for FAD. Arg199 is a catalytic residue. Residues Asp315 and Ala328 each contribute to the FAD site.

It belongs to the paxM FAD-dependent monooxygenase family. FAD is required as a cofactor.

It localises to the membrane. Its pathway is secondary metabolite biosynthesis. Its function is as follows. FAD-dependent monooxygenase; part of the gene cluster that mediates the biosynthesis of nigerpyrone and its derivatives carbonarone A and pestalamide A. The biosynthesis pathway begins with the polyketide assembly by epaA to form phenylacetyl triketide precursor from successive condensation of two malonyl-CoA, presumably with one phenylacetyl-CoA starter unit produced by the phenylacetyl-CoA ligase epaB. For the nigerpyrone biosynthesis, the reactive polyketide chain is released as an aldehyde through the R-domain. A nonenzymatic cyclization and dehydration may create nigerpyrone. For the biosynthesis of carbonarone A and pestalamide A, an extra methyl group is added through the C-methyltransferase domain. Several further steps involving the dehydrogenase orf1, the cytochrome P450 monooxygenase orf2 and the FAD-dependent monooxygenase orf3 are required to form a carbonarone A precursor which is converted to carbonarone A via cyclization. The O-acetyltransferase epaC could catalyze the transfer of 2-methylsuccinyl-CoA, a common intermediate in the ethylmalonyl-CoA pathway, to generate the final product pestalamide A. In Aspergillus niger (strain ATCC MYA-4892 / CBS 513.88 / FGSC A1513), this protein is FAD-dependent monooxygenase orf3.